A 99-amino-acid polypeptide reads, in one-letter code: Bacterial microcompartment shell vertex protein EutN (99 aa).

The region spanning 5-87 (MKLAVVTGQI…VDLCVIGIVD (83 aa)) is the BMV domain.

This sequence belongs to the CcmL/EutN family. As to quaternary structure, homopentamer with a small central pore.

The protein resides in the bacterial microcompartment. Its pathway is amine and polyamine degradation; ethanolamine degradation. Its function is as follows. Probably forms vertices in the bacterial microcompartment (BMC) shell dedicated to ethanolamine degradation. Expression of eutK, eutL, eutM, eutN, eutS (eutSMNLK) in E.coli leads to formation of a single BMC. Coexpression of eutQ with eutSMNLK permits E.coli to make cells with more than one mobile BMC, as is usual in vivo. It may be involved in transporting positively charged molecules into and out of the BMC. Functionally, the ethanolamine (EA) catabolic bacterial microcompartment (BMC) probably concentrates low levels of ethanolamine catabolic enzymes, concentrates volatile reaction intermediates, keeps the level of toxic acetaldehyde low, generates enough acetyl-CoA to support cell growth, and maintains a pool of free coenzyme A (CoA) and NAD. In terms of biological role, expression of the eut operon allows this bacteria to use ethanolamine (EA) as a carbon, nitrogen and energy source. It relies on cobalamin (vitamin B12) both as a cofactor for the ethanolamine ammonia-lyase (EAL) activity and to induce the operon. EA enhances bacterial survival in macrophages in a concentration-dependent manner, suggesting it is an important nutrient during infection. The sequence is that of Bacterial microcompartment shell vertex protein EutN from Salmonella typhimurium (strain LT2 / SGSC1412 / ATCC 700720).